We begin with the raw amino-acid sequence, 170 residues long: IMPACT family member YDL177C (170 aa).

The tract at residues 79–98 (KKKGNKANKSNNSHVNKSRN) is disordered.

This sequence belongs to the IMPACT family.

The sequence is that of IMPACT family member YDL177C from Saccharomyces cerevisiae (strain ATCC 204508 / S288c) (Baker's yeast).